A 602-amino-acid polypeptide reads, in one-letter code: uncharacterized protein (602 aa).

The 160-residue stretch at 51-210 (QYLGTQPRDF…PFVSYQPDAD (160 aa)) folds into the Helicase ATP-binding domain. Residues 430–439 (PHRESAHDPL) are compositionally biased toward basic and acidic residues. Disordered stretches follow at residues 430 to 452 (PHRESAHDPLDGDPATRTQTERG) and 518 to 538 (RAQLQKGATQPATSGASASVH). Residues 523 to 534 (KGATQPATSGAS) are compositionally biased toward polar residues.

The protein to M.leprae ML1624.

This is an uncharacterized protein from Mycobacterium tuberculosis (strain ATCC 25618 / H37Rv).